The primary structure comprises 771 residues: U3 small nucleolar RNA-associated protein 14 homolog A (771 aa).

The segment at 23–49 (PKDYLLSESEDEGDNDGERKHQKLLEA) is disordered. Ser-29, Ser-31, Ser-52, Ser-77, and Ser-81 each carry phosphoserine. A coiled-coil region spans residues 40–67 (ERKHQKLLEAISSLDGKNRRKLAERSEA). Residue Lys-122 forms a Glycyl lysine isopeptide (Lys-Gly) (interchain with G-Cter in SUMO2) linkage. Thr-205 is subject to Phosphothreonine. Coiled coils occupy residues 216–290 (SLEE…EKAR) and 317–347 (LEAR…EEEE). Disordered regions lie at residues 334 to 355 (TQKL…DVEE) and 367 to 557 (MNAD…KKEQ). A compositionally biased stretch (acidic residues) spans 342–355 (ESEEEEGGTEDVEE). Positions 399-436 (LEAHGVSESEGEERPVAEEEILLREFEERRSLRKRSEL) are enriched in basic and acidic residues. Ser-405 and Ser-407 each carry phosphoserine. The residue at position 433 (Arg-433) is a Citrulline. Ser-437 and Ser-445 each carry phosphoserine. A Glycyl lysine isopeptide (Lys-Gly) (interchain with G-Cter in SUMO2) cross-link involves residue Lys-449. Phosphoserine is present on Ser-453. Over residues 504–529 (RPERVQTLEELEELGKEECFQNKELP) the composition is skewed to basic and acidic residues. Lys-519 participates in a covalent cross-link: Glycyl lysine isopeptide (Lys-Gly) (interchain with G-Cter in SUMO2). Residues 535 to 544 (GQQSERTPNN) show a composition bias toward polar residues. Basic and acidic residues predominate over residues 547 to 557 (DAPKEKKKKEQ). Position 569 is a phosphoserine (Ser-569). Arg-589 carries the citrulline modification. A Glycyl lysine isopeptide (Lys-Gly) (interchain with G-Cter in SUMO2) cross-link involves residue Lys-733. Positions 740 to 751 (RSSSRSDLSVIQ) are enriched in polar residues. Residues 740-771 (RSSSRSDLSVIQRNPKRITTRHKKQLKKCSVD) form a disordered region. A compositionally biased stretch (basic residues) spans 753-771 (NPKRITTRHKKQLKKCSVD).

This sequence belongs to the UTP14 family. In terms of assembly, interacts with DHX37. Post-translationally, citrullinated by PADI4. Ubiquitously expressed.

It is found in the nucleus. The protein resides in the nucleolus. Functionally, may be required for ribosome biogenesis. The polypeptide is U3 small nucleolar RNA-associated protein 14 homolog A (UTP14A) (Homo sapiens (Human)).